Consider the following 371-residue polypeptide: Peptide chain release factor 2 (371 aa).

Residue Q253 is modified to N5-methylglutamine.

The protein belongs to the prokaryotic/mitochondrial release factor family. Post-translationally, methylated by PrmC. Methylation increases the termination efficiency of RF2.

The protein resides in the cytoplasm. Peptide chain release factor 2 directs the termination of translation in response to the peptide chain termination codons UGA and UAA. The chain is Peptide chain release factor 2 from Mycobacterium ulcerans (strain Agy99).